A 310-amino-acid polypeptide reads, in one-letter code: Oxygen-dependent coproporphyrinogen-III oxidase (310 aa).

Residue Ser97 coordinates substrate. His101 and His111 together coordinate a divalent metal cation. The active-site Proton donor is His111. 113–115 serves as a coordination point for substrate; that stretch reads NFR. A divalent metal cation contacts are provided by His150 and His180. Positions 245–280 are important for dimerization; that stretch reads YVEFNLLYDRGTRFGLEFGGRTESILMSLPPRVVWR. Position 263–265 (263–265) interacts with substrate; the sequence is GGR.

Belongs to the aerobic coproporphyrinogen-III oxidase family. As to quaternary structure, homodimer. A divalent metal cation is required as a cofactor.

The protein resides in the cytoplasm. It carries out the reaction coproporphyrinogen III + O2 + 2 H(+) = protoporphyrinogen IX + 2 CO2 + 2 H2O. It participates in porphyrin-containing compound metabolism; protoporphyrin-IX biosynthesis; protoporphyrinogen-IX from coproporphyrinogen-III (O2 route): step 1/1. Functionally, involved in the heme biosynthesis. Catalyzes the aerobic oxidative decarboxylation of propionate groups of rings A and B of coproporphyrinogen-III to yield the vinyl groups in protoporphyrinogen-IX. This chain is Oxygen-dependent coproporphyrinogen-III oxidase, found in Coxiella burnetii (strain RSA 493 / Nine Mile phase I).